Reading from the N-terminus, the 149-residue chain is Endothelin-1 (149 aa).

The propeptide occupies 1-33 (AAETVVSGAELSLTANSGGEKTPPHAPGLLRRS). Residues 6–26 (VSGAELSLTANSGGEKTPPHA) form a disordered region. 2 disulfides stabilise this stretch: cysteine 36-cysteine 50 and cysteine 38-cysteine 46. Positions 57–149 (VNTPGHIAPY…ISQQLGNGKK (93 aa)) are excised as a propeptide. The endothelin-like stretch occupies residues 93 to 107 (CQCANQKDKKCWNFC).

The protein belongs to the endothelin/sarafotoxin family.

It is found in the secreted. Endothelins are endothelium-derived vasoconstrictor peptides. Probable ligand for G-protein coupled receptors EDNRA and EDNRB which activates PTK2B, BCAR1, BCAR3 and, GTPases RAP1 and RHOA cascade in glomerular mesangial cells. Also binds the DEAR/FBXW7-AS1 receptor. Promotes mesenteric arterial wall remodeling via activation of ROCK signaling and subsequent colocalization of NFATC3 with F-actin filaments. NFATC3 then translocates to the nucleus where it subsequently promotes the transcription of the smooth muscle hypertrophy and differentiation marker ACTA2. This chain is Endothelin-1 (EDN1), found in Cavia porcellus (Guinea pig).